The following is a 691-amino-acid chain: Elongation factor G (691 aa).

Residues 12-286 (KKLRNIGIMA…GILEYLPSPL (275 aa)) form the tr-type G domain. GTP is bound by residues 21–28 (AHIDAGKT), 85–89 (DTPGH), and 139–142 (NKMD).

This sequence belongs to the TRAFAC class translation factor GTPase superfamily. Classic translation factor GTPase family. EF-G/EF-2 subfamily.

It localises to the cytoplasm. In terms of biological role, catalyzes the GTP-dependent ribosomal translocation step during translation elongation. During this step, the ribosome changes from the pre-translocational (PRE) to the post-translocational (POST) state as the newly formed A-site-bound peptidyl-tRNA and P-site-bound deacylated tRNA move to the P and E sites, respectively. Catalyzes the coordinated movement of the two tRNA molecules, the mRNA and conformational changes in the ribosome. The chain is Elongation factor G from Thermosipho africanus (strain TCF52B).